A 332-amino-acid polypeptide reads, in one-letter code: DNA-directed RNA polymerase 2A (332 aa).

Residues D33, K108, and D265 contribute to the active site.

It belongs to the phage and mitochondrial RNA polymerase family.

The catalysed reaction is RNA(n) + a ribonucleoside 5'-triphosphate = RNA(n+1) + diphosphate. DNA-dependent RNA polymerase catalyzes the transcription of DNA into RNA using the four ribonucleoside triphosphates as substrates. In Nicotiana tabacum (Common tobacco), this protein is DNA-directed RNA polymerase 2A (RPOT2-SYL).